Reading from the N-terminus, the 436-residue chain is GTPase Obg (436 aa).

The region spanning 2–160 (SMFLDTAKIK…RELQLELKIL (159 aa)) is the Obg domain. Positions 161 to 338 (ADVGLVGFPS…LLDATAELLD (178 aa)) constitute an OBG-type G domain. Residues 167–174 (GFPSVGKS), 192–196 (FTTIV), 214–217 (DLPG), 284–287 (NKMD), and 319–321 (SGL) each bind GTP. Mg(2+) contacts are provided by Ser174 and Thr194. The region spanning 358 to 436 (GFDEEEKAFE…IGKFEFEFVD (79 aa)) is the OCT domain.

It belongs to the TRAFAC class OBG-HflX-like GTPase superfamily. OBG GTPase family. As to quaternary structure, monomer. Requires Mg(2+) as cofactor.

It localises to the cytoplasm. In terms of biological role, an essential GTPase which binds GTP, GDP and possibly (p)ppGpp with moderate affinity, with high nucleotide exchange rates and a fairly low GTP hydrolysis rate. Plays a role in control of the cell cycle, stress response, ribosome biogenesis and in those bacteria that undergo differentiation, in morphogenesis control. The chain is GTPase Obg from Streptococcus pneumoniae (strain CGSP14).